Reading from the N-terminus, the 235-residue chain is Cytidylate kinase (235 aa).

ATP is bound at residue 16-24 (GPAASGKST).

This sequence belongs to the cytidylate kinase family. Type 1 subfamily.

It is found in the cytoplasm. It carries out the reaction CMP + ATP = CDP + ADP. The enzyme catalyses dCMP + ATP = dCDP + ADP. The chain is Cytidylate kinase from Chlorobaculum tepidum (strain ATCC 49652 / DSM 12025 / NBRC 103806 / TLS) (Chlorobium tepidum).